We begin with the raw amino-acid sequence, 177 residues long: UPF0316 protein STH2077 (177 aa).

Transmembrane regions (helical) follow at residues 9-29 (AALD…VNTV) and 41-61 (LASA…GLVV).

It belongs to the UPF0316 family.

The protein localises to the cell membrane. The chain is UPF0316 protein STH2077 from Symbiobacterium thermophilum (strain DSM 24528 / JCM 14929 / IAM 14863 / T).